A 1229-amino-acid polypeptide reads, in one-letter code: MSVHGRDPKKRQLRLISVAFKEASIDSPSFRASVNFFQTRVDALEDWIEKTVDFFDQKYKVSFEDFRRAKETLLSQLLPPPALLSNGFVSNQSFTPRLIDSFNKDYYDFSMKLLQIVKGDDSSHSTALLELMTTAIEPYRNVRKNFDFYQGKYDSMLASYQAIRISKTSLEPSSIKSDALQLFEVQKNYLKASLDLISAISAVKLSLDKFILESMKVLKSRSIFITKDSGRKIDLSPCINEYLDNYAIWVENSIEGSKVLDSDISNAKKQAYRYTLKRITPSSDTSDYNIRSIHSSKLLSKDTQVPPKSPEKSGWLYMKTQVGKPTREIWVRRWCFLKNAVFGMFLLSPSKTYVEETDKFGVFLTNVRYDPEEDRKFCFEVKIFGNKVTEAHDNMSKDITLVFQTSNYLDLKSWLIAFEATKKYVMSIQHDSLEYELAFKRFSPKFFEFASSTTTSIDQLITTFDKETESLYETLNCSISEYDILTLGEEKVFQFQMPTTPISTKMTQLAILSNFLTKGSWFPNAVLANIWGTTDWSEYTILPGKGKKPSSLLTIDGKRLPIRNSTIYPQYYSNELKVLDLQFKSLVFSPDQRLEKLPEELLLFKFEALWCPNKKQKFSATCFCTKDYIYCYMNSMEFICLTKISLSEIVSVEADRSSKKTLKLYDASGLQMKAIVLFSDYKLIASKLQYLLENKAIKNPNSNEEILVKFEQMEKESQEKKQEELYKIEQENSFDRKATSVSKIIKSRVTFWEMSDDASTLLNRLKKLQTEYSITYNHEYEISSKGLAHILFGDKSNAFPKCLFLARKDGEEHGKRFWYKNKDINGKSQLVRKIPFRLDMTGNFLNTGKYHRDKESKMIFATQRIVKIVDNKYYEVDLDPFFVKVPFCHLLKLSIKFVITESYDVDNHLEIKLNMTASSSSLHVLYKLEYIDSRTGKTIEKLSLAEIICQTWALKFAHSEFLLIRRVLRYYLEKIGKHGKVIKAIKLCGILGVLSNKSEEPATEKNGNSKESESMQYDIRYSCTILFLVFIKLMVYRVTNLTFVFFRILIGILLLCAEKFSRINRMMVVGLLASIMINILLSEKASVPYWSIKRAEKLFHDRLGSDKFTMQRAIYISDSDLLSSQLSVPSNNPIFEKFSEDNFNKDYQYSETRKQLAMRRNELLIELRILQDMEKQLVHDDYEKFLLEEVNKCSMVSIEMTDLWFNDTQLQNYCSICNEELEKLRPPIT.

Topologically, residues 1–1066 (MSVHGRDPKK…AEKFSRINRM (1066 aa)) are cytoplasmic. Residues 309–423 (SPEKSGWLYM…WLIAFEATKK (115 aa)) enclose the PH domain. The VASt domain maps to 771-976 (EYSITYNHEY…VLRYYLEKIG (206 aa)). The helical transmembrane segment at 1067–1087 (MVVGLLASIMINILLSEKASV) threads the bilayer. Topologically, residues 1088 to 1229 (PYWSIKRAEK…ELEKLRPPIT (142 aa)) are lumenal. N1206 carries an N-linked (GlcNAc...) asparagine glycan.

It belongs to the SIP3 family. In terms of assembly, interacts with SNF1.

It localises to the endoplasmic reticulum membrane. Functionally, may be involved in sterol transfer between intracellular membranes. In Saccharomyces cerevisiae (strain ATCC 204508 / S288c) (Baker's yeast), this protein is Membrane-anchored lipid-binding protein SIP3.